Consider the following 335-residue polypeptide: Serpentine receptor class alpha-13 (335 aa).

Residues Met1–Tyr25 are Extracellular-facing. The chain crosses the membrane as a helical span at residues Ile26 to Ala46. The Cytoplasmic portion of the chain corresponds to Ile47–Arg61. A helical membrane pass occupies residues Val62 to Lys82. At Ala83–Phe108 the chain is on the extracellular side. The chain crosses the membrane as a helical span at residues Ile109–Ile129. The Cytoplasmic segment spans residues Asp130–Ser146. The helical transmembrane segment at Ile147–Leu167 threads the bilayer. Residues Thr168–His192 lie on the Extracellular side of the membrane. The helical transmembrane segment at Ile193–Met213 threads the bilayer. The Cytoplasmic portion of the chain corresponds to Tyr214–Ala243. Residues Ile244–Leu264 form a helical membrane-spanning segment. Over Leu265 to Asn278 the chain is Extracellular. A helical transmembrane segment spans residues Leu279–Cys299. The Cytoplasmic segment spans residues Lys300 to Lys335.

It belongs to the nematode receptor-like protein sra family. In terms of tissue distribution, expressed in the AWA and AWC chemosensory neurons.

The protein resides in the membrane. In terms of biological role, chemosensory receptor that negatively regulates RAS/MAPK signaling during vulva induction and the negative regulation of olfaction of volitile attractants. Required for the suppression of vulval induction in response to food starvation. Signaling acts through the GPA-5 G-alpha protein subunit. This is Serpentine receptor class alpha-13 (sra-13) from Caenorhabditis elegans.